The following is a 103-amino-acid chain: Large ribosomal subunit protein uL24 (103 aa).

Belongs to the universal ribosomal protein uL24 family. Part of the 50S ribosomal subunit.

Its function is as follows. One of two assembly initiator proteins, it binds directly to the 5'-end of the 23S rRNA, where it nucleates assembly of the 50S subunit. Functionally, one of the proteins that surrounds the polypeptide exit tunnel on the outside of the subunit. The sequence is that of Large ribosomal subunit protein uL24 from Ruegeria pomeroyi (strain ATCC 700808 / DSM 15171 / DSS-3) (Silicibacter pomeroyi).